Here is a 467-residue protein sequence, read N- to C-terminus: Ribulose bisphosphate carboxylase large chain (467 aa).

Positions 1 to 2 (MS) are excised as a propeptide. Pro-3 carries the N-acetylproline modification. At Lys-14 the chain carries N6,N6,N6-trimethyllysine. The substrate site is built by Asn-123 and Thr-173. Lys-175 acts as the Proton acceptor in catalysis. Lys-177 contributes to the substrate binding site. Mg(2+) is bound by residues Lys-201, Asp-203, and Glu-204. Residue Lys-201 is modified to N6-carboxylysine. His-294 acts as the Proton acceptor in catalysis. Substrate-binding residues include Arg-295, His-327, and Ser-379.

Belongs to the RuBisCO large chain family. Type I subfamily. Heterohexadecamer of 8 large chains and 8 small chains; disulfide-linked. The disulfide link is formed within the large subunit homodimers. Mg(2+) serves as cofactor. In terms of processing, the disulfide bond which can form in the large chain dimeric partners within the hexadecamer appears to be associated with oxidative stress and protein turnover.

It is found in the plastid. Its subcellular location is the chloroplast. The catalysed reaction is 2 (2R)-3-phosphoglycerate + 2 H(+) = D-ribulose 1,5-bisphosphate + CO2 + H2O. It catalyses the reaction D-ribulose 1,5-bisphosphate + O2 = 2-phosphoglycolate + (2R)-3-phosphoglycerate + 2 H(+). Its function is as follows. RuBisCO catalyzes two reactions: the carboxylation of D-ribulose 1,5-bisphosphate, the primary event in carbon dioxide fixation, as well as the oxidative fragmentation of the pentose substrate in the photorespiration process. Both reactions occur simultaneously and in competition at the same active site. This Calamus usitatus (Palm tree) protein is Ribulose bisphosphate carboxylase large chain.